The sequence spans 197 residues: ATP-dependent Clp protease proteolytic subunit (197 aa).

The active-site Nucleophile is Ser-97. His-122 is a catalytic residue.

This sequence belongs to the peptidase S14 family. Fourteen ClpP subunits assemble into 2 heptameric rings which stack back to back to give a disk-like structure with a central cavity, resembling the structure of eukaryotic proteasomes.

It localises to the cytoplasm. The enzyme catalyses Hydrolysis of proteins to small peptides in the presence of ATP and magnesium. alpha-casein is the usual test substrate. In the absence of ATP, only oligopeptides shorter than five residues are hydrolyzed (such as succinyl-Leu-Tyr-|-NHMec, and Leu-Tyr-Leu-|-Tyr-Trp, in which cleavage of the -Tyr-|-Leu- and -Tyr-|-Trp bonds also occurs).. Cleaves peptides in various proteins in a process that requires ATP hydrolysis. Has a chymotrypsin-like activity. Plays a major role in the degradation of misfolded proteins. The polypeptide is ATP-dependent Clp protease proteolytic subunit (Trichlorobacter lovleyi (strain ATCC BAA-1151 / DSM 17278 / SZ) (Geobacter lovleyi)).